The sequence spans 360 residues: MTKRLLILEDGTIFEGEPFGADIDVTGEIVFNTGMTGYQESITDQSYNGQILTFTYPLIGNYGINRDDYESISPTCKGVVVSEVSRLASNWRKQMTLDAFLKIKGIPGISGIDTRALTKIIRQHGTMKATMADDGDSIQHLKDQLRATVLPTNTIEQVSTKTAYPAPGIGKNIVLVDFGLKHSILREFSKRQCNITVVPFNITAEEVFQLNPDGLMLSNGPGNPEDLPEALDMIRGVQGKIPIFGICMGHQLFSLANGAKTCKMTFGHRGFNHAVREIATGRIDFTSQNHGYAVERSSLPDTLMVTHEDINDKTVEGVKHRDFPAFSVQFHPDAAPGPHDASYLFDEFLEMIDSWRCTSK.

Positions 1-169 (MTKRLLILED…TKTAYPAPGI (169 aa)) are CPSase. Positions 46, 220, and 222 each coordinate L-glutamine. Residues 172–358 (NIVLVDFGLK…LEMIDSWRCT (187 aa)) form the Glutamine amidotransferase type-1 domain. Residue Cys247 is the Nucleophile of the active site. Positions 248, 251, 289, 291, and 292 each coordinate L-glutamine. Residues His331 and Asp333 contribute to the active site.

The protein belongs to the CarA family. As to quaternary structure, composed of two chains; the small (or glutamine) chain promotes the hydrolysis of glutamine to ammonia, which is used by the large (or ammonia) chain to synthesize carbamoyl phosphate. Tetramer of heterodimers (alpha,beta)4.

The enzyme catalyses hydrogencarbonate + L-glutamine + 2 ATP + H2O = carbamoyl phosphate + L-glutamate + 2 ADP + phosphate + 2 H(+). The catalysed reaction is L-glutamine + H2O = L-glutamate + NH4(+). It participates in amino-acid biosynthesis; L-arginine biosynthesis; carbamoyl phosphate from bicarbonate: step 1/1. It functions in the pathway pyrimidine metabolism; UMP biosynthesis via de novo pathway; (S)-dihydroorotate from bicarbonate: step 1/3. Its function is as follows. Small subunit of the glutamine-dependent carbamoyl phosphate synthetase (CPSase). CPSase catalyzes the formation of carbamoyl phosphate from the ammonia moiety of glutamine, carbonate, and phosphate donated by ATP, constituting the first step of 2 biosynthetic pathways, one leading to arginine and/or urea and the other to pyrimidine nucleotides. The small subunit (glutamine amidotransferase) binds and cleaves glutamine to supply the large subunit with the substrate ammonia. The protein is Carbamoyl phosphate synthase small chain of Streptococcus pyogenes serotype M18 (strain MGAS8232).